The sequence spans 234 residues: Ribose-5-phosphate isomerase A (234 aa).

Residues 35–38 (SGTT), 91–94 (DGAD), and 105–108 (KGGG) contribute to the substrate site. Glu114 functions as the Proton acceptor in the catalytic mechanism. Position 132 (Lys132) interacts with substrate.

The protein belongs to the ribose 5-phosphate isomerase family. Homodimer.

It catalyses the reaction aldehydo-D-ribose 5-phosphate = D-ribulose 5-phosphate. It functions in the pathway carbohydrate degradation; pentose phosphate pathway; D-ribose 5-phosphate from D-ribulose 5-phosphate (non-oxidative stage): step 1/1. Functionally, catalyzes the reversible conversion of ribose-5-phosphate to ribulose 5-phosphate. The chain is Ribose-5-phosphate isomerase A from Methanococcus aeolicus (strain ATCC BAA-1280 / DSM 17508 / OCM 812 / Nankai-3).